The following is a 348-amino-acid chain: Bombesin receptor-activated protein C6orf89 homolog (348 aa).

Over 1 to 58 (MDLAANEISIYDKLSETVDLVRQTGHQCGMSEKAIEKFIRQLLEKNEPQRGPPQYPLL) the chain is Cytoplasmic. Residues 59 to 79 (IAMYKVLLTLGLILFTAYFVI) traverse the membrane as a helical segment. At 80-348 (QPFSSLAPEP…ICDGTTLSEL (269 aa)) the chain is on the extracellular side.

As to quaternary structure, homodimer. Interacts with BRS3. Interacts (via N-terminus) with SIN3B. Post-translationally, glycosylated.

The protein localises to the golgi apparatus membrane. Its subcellular location is the cytoplasm. Its function is as follows. Exhibits histone deacetylase (HDAC) enhancer properties. May play a role in cell cycle progression and wound repair of bronchial epithelial cells. The chain is Bombesin receptor-activated protein C6orf89 homolog from Rattus norvegicus (Rat).